The sequence spans 63 residues: U7-theraphotoxin-Cg1a (63 aa).

An N-terminal signal peptide occupies residues 1–21 (MKTSILFVIFGLALLFALSVA). A propeptide spanning residues 22–31 (IEMEEEETDR) is cleaved from the precursor. 3 disulfides stabilise this stretch: Cys-33–Cys-47, Cys-40–Cys-52, and Cys-46–Cys-59.

In terms of tissue distribution, expressed by the venom gland.

The protein resides in the secreted. In terms of biological role, inhibits preferentially tetrodotoxin-insensitive sodium currents (Nav) on rat cardiac myocytes (IC(50) is 0.26 uM) and has weaker inhibition activity toward tetrodotoxin-sensitive sodium currents on rat dorsal root ganglion (DRG) sensory neurons (IC(50) is 0.83 uM) and on cockroach dorsal unpaired median (DUM) neurons (IC(50) is 1.19 uM). Has no significant effect on potassium currents on DRG neurons. This chain is U7-theraphotoxin-Cg1a, found in Chilobrachys guangxiensis (Chinese earth tiger tarantula).